A 389-amino-acid chain; its full sequence is Calreticulin (389 aa).

Positions 1-13 are cleaved as a signal peptide; that stretch reads MFTLFLLIALSSA. The segment at 12–189 is N-domain; that stretch reads SAKVYFHETF…GVEKQEGKFD (178 aa). Thr-20, Asn-52, and Asn-53 together coordinate Ca(2+). Cys-96 and Cys-130 are oxidised to a cystine. An alpha-D-glucoside contacts are provided by Tyr-100, Lys-102, Tyr-121, and Asp-128. Repeat copies occupy residues 183–194, 202–213, 219–230, 237–248, 252–262, 266–276, and 280–290. Residues 183–248 form a 4 X approximate repeats region; sequence KQEGKFDEDW…NAKKPEEWND (66 aa). A P-domain region spans residues 190–301; the sequence is EDWDMLAPKE…YVYDPELYKY (112 aa). Positions 213–232 are enriched in basic and acidic residues; that stretch reads DEKEIDDPNDKKPEGWDDIP. The disordered stretch occupies residues 213 to 256; sequence DEKEIDDPNDKKPEGWDDIPKTIVDPNAKKPEEWNDEDDGEWEA. Residues 252-290 form a 3 X approximate repeats region; it reads GEWEAPTIENPEYKGEWKPKRIPNPAYKGEWVHPQIANP. A C-domain region spans residues 302 to 389; that stretch reads DSFAYIGIDV…IKKEENKEEL (88 aa). Asp-310 is an an alpha-D-glucoside binding site. Asp-321 provides a ligand contact to Ca(2+). Residues 329–388 adopt a coiled-coil conformation; it reads IEEAEKEAKVILERNAAEKKMRDEIKEAEKQKEEEAKKEAEKQKEEETKEEIKKEENKEE. The tract at residues 347–389 is disordered; it reads KKMRDEIKEAEKQKEEEAKKEAEKQKEEETKEEIKKEENKEEL. Positions 386-389 match the Prevents secretion from ER motif; that stretch reads KEEL.

Belongs to the calreticulin family. Interacts (via C-terminus) with host C1q.

It localises to the endoplasmic reticulum lumen. It is found in the cell projection. The protein localises to the uropodium. Its subcellular location is the cell surface. The protein resides in the phagocytic cup. Its function is as follows. Molecular calcium-binding chaperone promoting folding, oligomeric assembly and quality control in the ER via the calreticulin/calnexin cycle. This lectin may interact transiently with almost all of the monoglucosylated glycoproteins that are synthesized in the ER. Plays a role in host cell phagocytosis, possibly by acting as a receptor for host C1q. Binding to C1q prevents the activation of the host classical complement pathway. Also, binds to apoptotic host cells independently of host C1q and collectins. This chain is Calreticulin, found in Entamoeba histolytica (strain ATCC 30459 / HM-1:IMSS / ABRM).